The following is a 278-amino-acid chain: Transmembrane protein 41A-B (278 aa).

Positions 1-23 are cleaved as a signal peptide; sequence MRSIWGLIVLVAAATFYLYLLSA. The next 5 membrane-spanning stretches (helical) occupy residues 78–98, 101–121, 164–184, 191–211, and 230–250; these read GYVFILFCSAYLYKQSFAIPG, FLNMLSGALFGPLHGLIIACT, LFFFLLFLRFFPMTPNWFLNV, IPIPIFFFSILIGLIPYNFIC, and WFTLLQLLLIACVALLPGALI.

It belongs to the TMEM41 family.

The protein resides in the membrane. The sequence is that of Transmembrane protein 41A-B from Danio rerio (Zebrafish).